We begin with the raw amino-acid sequence, 483 residues long: FAD-dependent oxidoreductase oblC (483 aa).

The signal sequence occupies residues 1-21 (MRSVTSLVSFSACLLASSVTA). N-linked (GlcNAc...) asparagine glycans are attached at residues N100, N137, N190, and N240.

This sequence belongs to the beta-cyclopiazonate dehydrogenase family. It depends on FAD as a cofactor.

Its pathway is secondary metabolite biosynthesis; terpenoid biosynthesis. Functionally, FAD-dependent oxidoreductase; part of the gene cluster that mediates the biosynthesis of the sesterterpenes ophiobolins, fungal phytotoxins with potential anti-cancer activities. The first step of the pathway is performed by the sesterterpene synthase oblA that possesses both prenyl transferase and terpene cyclase activity, converting isopentenyl diphosphate and dimethylallyl diphosphate into geranylfarnesyl diphosphate (GFPP) and further converting GFPP into ophiobolin F, respectively. Other sesterterpenoids (C(25) terpenoids) are found as minor products of oblA. The cytochrome P450 monooxygenase oblB then catalyzes a four-step oxidative transformation of ophiobolin F to yield ophiobolin C. The FAD-dependent oxidoreductase oblC might be involved in a later oxidation step that produces ophiobolin A. This chain is FAD-dependent oxidoreductase oblC, found in Cochliobolus heterostrophus (strain C5 / ATCC 48332 / race O) (Southern corn leaf blight fungus).